The chain runs to 156 residues: Deoxyuridine 5'-triphosphate nucleotidohydrolase (156 aa).

Residues 74 to 76 (RSG), Asn87, 91 to 93 (TID), and Lys101 each bind substrate.

It belongs to the dUTPase family. Mg(2+) is required as a cofactor.

The catalysed reaction is dUTP + H2O = dUMP + diphosphate + H(+). The protein operates within pyrimidine metabolism; dUMP biosynthesis; dUMP from dCTP (dUTP route): step 2/2. Functionally, this enzyme is involved in nucleotide metabolism: it produces dUMP, the immediate precursor of thymidine nucleotides and it decreases the intracellular concentration of dUTP so that uracil cannot be incorporated into DNA. The protein is Deoxyuridine 5'-triphosphate nucleotidohydrolase of Wolbachia sp. subsp. Brugia malayi (strain TRS).